Consider the following 122-residue polypeptide: Large ribosomal subunit protein bL12 (122 aa).

It belongs to the bacterial ribosomal protein bL12 family. As to quaternary structure, homodimer. Part of the ribosomal stalk of the 50S ribosomal subunit. Forms a multimeric L10(L12)X complex, where L10 forms an elongated spine to which 2 to 4 L12 dimers bind in a sequential fashion. Binds GTP-bound translation factors.

In terms of biological role, forms part of the ribosomal stalk which helps the ribosome interact with GTP-bound translation factors. Is thus essential for accurate translation. This Fusobacterium nucleatum subsp. nucleatum (strain ATCC 25586 / DSM 15643 / BCRC 10681 / CIP 101130 / JCM 8532 / KCTC 2640 / LMG 13131 / VPI 4355) protein is Large ribosomal subunit protein bL12.